The chain runs to 345 residues: Dihydroorotase (345 aa).

Residues His-13 and His-15 each coordinate Zn(2+). Residues 15-17 and Asn-41 contribute to the substrate site; that span reads HLR. Zn(2+) contacts are provided by Lys-99, His-136, and His-174. Lys-99 carries the post-translational modification N6-carboxylysine. His-136 lines the substrate pocket. Leu-219 contacts substrate. Position 247 (Asp-247) interacts with Zn(2+). Residue Asp-247 is part of the active site. Positions 251 and 263 each coordinate substrate.

It belongs to the metallo-dependent hydrolases superfamily. DHOase family. Class II DHOase subfamily. Homodimer. Requires Zn(2+) as cofactor.

The catalysed reaction is (S)-dihydroorotate + H2O = N-carbamoyl-L-aspartate + H(+). Its pathway is pyrimidine metabolism; UMP biosynthesis via de novo pathway; (S)-dihydroorotate from bicarbonate: step 3/3. Catalyzes the reversible cyclization of carbamoyl aspartate to dihydroorotate. The chain is Dihydroorotase from Acaryochloris marina (strain MBIC 11017).